Reading from the N-terminus, the 83-residue chain is MPAIEVGRIAVVIAGRRAGQKVVVADIIDKNFVLVTGAGLNKVKRRRMNVKHLEPLPERVNIERGASDEEIKKALEEAGISLE.

It belongs to the eukaryotic ribosomal protein eL14 family.

The sequence is that of Large ribosomal subunit protein eL14 from Thermococcus gammatolerans (strain DSM 15229 / JCM 11827 / EJ3).